The chain runs to 461 residues: tRNA modification GTPase MnmE (461 aa).

The (6S)-5-formyl-5,6,7,8-tetrahydrofolate site is built by R23, E88, and R127. Residues 223-383 (GLNTVIVGKP…LKECIKNLFF (161 aa)) form the TrmE-type G domain. Position 233 (N233) interacts with K(+). GTP-binding positions include 233–238 (NVGKSS), 252–258 (TEIPGTT), and 277–280 (DTAG). S237 is a Mg(2+) binding site. T252, I254, and T257 together coordinate K(+). T258 contributes to the Mg(2+) binding site. Residue K461 coordinates (6S)-5-formyl-5,6,7,8-tetrahydrofolate.

It belongs to the TRAFAC class TrmE-Era-EngA-EngB-Septin-like GTPase superfamily. TrmE GTPase family. Homodimer. Heterotetramer of two MnmE and two MnmG subunits. The cofactor is K(+).

It localises to the cytoplasm. Functionally, exhibits a very high intrinsic GTPase hydrolysis rate. Involved in the addition of a carboxymethylaminomethyl (cmnm) group at the wobble position (U34) of certain tRNAs, forming tRNA-cmnm(5)s(2)U34. This is tRNA modification GTPase MnmE from Clostridium botulinum (strain Okra / Type B1).